The primary structure comprises 135 residues: MSWTQPALLTCLLVLSAITLFDGADSAVSDKRDAVNPQGALRKIFMPEADAASFFKRRSRRAVKTQDEINAEQRQRLAADERRREYHEEQRNKYENYAEEENDEQDERTREKTEQWREFHYDGLDPSYEYNRHTI.

A signal peptide spans 1-26; the sequence is MSWTQPALLTCLLVLSAITLFDGADS. The propeptide at 28–61 is ucma-N; it reads VSDKRDAVNPQGALRKIFMPEADAASFFKRRSRR. Positions 64–114 form a coiled coil; sequence KTQDEINAEQRQRLAADERRREYHEEQRNKYENYAEEENDEQDERTREKTE. Residues 65–96 are compositionally biased toward basic and acidic residues; that stretch reads TQDEINAEQRQRLAADERRREYHEEQRNKYEN. Positions 65 to 135 are disordered; it reads TQDEINAEQR…PSYEYNRHTI (71 aa). 4-carboxyglutamate occurs at positions 68, 72, 81, 85, 88, 89, 95, 99, 100, 104, 107, 111, and 114. Over residues 97–106 the composition is skewed to acidic residues; the sequence is YAEEENDEQD. The segment covering 107–123 has biased composition (basic and acidic residues); that stretch reads ERTREKTEQWREFHYDG.

Belongs to the UCMA family. In terms of processing, proteolytically cleaved by a furin-like convertase to generate a persistent C-terminal fragment found in almost the entire cartilage matrix, and affecting osteoblast differentiation. Sulfated on tyrosine residues.

Its subcellular location is the secreted. It is found in the extracellular space. The protein resides in the extracellular matrix. Its function is as follows. May be involved in the negative control of osteogenic differentiation of osteochondrogenic precursor cells in peripheral zones of fetal cartilage and at the cartilage-bone interface. The polypeptide is Unique cartilage matrix-associated protein (ucma) (Danio rerio (Zebrafish)).